Consider the following 690-residue polypeptide: Protein SPT2 homolog (690 aa).

Residues 1 to 579 (MDFHNILVMA…PGHRPVFRPQ (579 aa)) are important for interaction with DNA. The stretch at 40-82 (ESAAVQAFLRRKEEEKRKKELEEKRKKERLLAKRIELKHDRKA) forms a coiled coil. Disordered regions lie at residues 105–167 (PKKR…APAP) and 186–619 (EIKV…QEEI). Basic and acidic residues predominate over residues 186 to 228 (EIKVVKKIEERPRTAEELREREYLERKNKRVETQKKKSEKEVK). The span at 229 to 243 (SAGISSSSKKATSLK) shows a compositional bias: low complexity. 2 stretches are compositionally biased toward basic and acidic residues: residues 244–259 (ECAD…DKHA) and 271–285 (TDKK…EKHS). Positions 369–380 (HETNSSAKRPSS) are enriched in polar residues. Gly residues predominate over residues 383–396 (GKGGSGHPAGGSSA). The segment covering 397-442 (GPGRSSSNSGTGPGRPGSVSSPGPGRQGSSSAAGPGRPSSSSSLGP) has biased composition (low complexity). 3 stretches are compositionally biased toward gly residues: residues 443-457 (GRLG…GRPG), 465-477 (GRPG…GPGR), and 489-521 (LGSG…GPGR). Positions 545–565 (VSETISSKNLVTRPSNGQING) are enriched in polar residues. The interval 580 to 690 (GIGRPPVGYK…KRQSKKLRTR (111 aa)) is important for interaction with histones. A compositionally biased stretch (acidic residues) spans 593-617 (DDDDDDDEYDSEMDDFIEDEGEPQE). The stretch at 650 to 690 (REQQKEEARSLRLGVQEDLEELRREEEELKRKRQSKKLRTR) forms a coiled coil.

Belongs to the SPT2 family. Interacts with POLR1A. Interacts with histones. Interacts with a heterotetrameric complex formed by histone H3 and H4, especially when the histone tetramer is not bound to DNA.

Its subcellular location is the nucleus. It localises to the nucleolus. Its function is as follows. Histone chaperone that stabilizes pre-existing histone tetramers and regulates replication-independent histone exchange on chromatin. Required for normal chromatin refolding in the coding region of transcribed genes, and for the suppression of spurious transcription. Binds DNA and histones and promotes nucleosome assembly (in vitro). Modulates RNA polymerase 1-mediated transcription. Required for optimal growth in the presence of the DNA damaging agents actinomycin D or mitomycin C (in vitro). Facilitates formation of tetrameric histone complexes containing histone H3 and H4. Modulates RNA polymerase 1-mediated transcription. Binds DNA, with a preference for branched DNA species, such as Y-form DNA and Holliday junction DNA. This is Protein SPT2 homolog (SPTY2D1) from Gallus gallus (Chicken).